We begin with the raw amino-acid sequence, 496 residues long: FAD-linked oxidoreductase AFUA_1G00980 (496 aa).

The N-terminal stretch at 1 to 21 (MRRATLIPLAIWVAGAAAAAA) is a signal peptide. Residues Asn49, Asn122, Asn205, Asn258, Asn344, Asn351, Asn371, and Asn382 are each glycosylated (N-linked (GlcNAc...) asparagine). In terms of domain architecture, FAD-binding PCMH-type spans 64 to 243 (MAPTYAVSVR…VEAVYQVTDL (180 aa)).

This sequence belongs to the oxygen-dependent FAD-linked oxidoreductase family. Requires FAD as cofactor.

Functionally, FAD-linked oxidoreductase; part of the gene cluster that mediates the biosynthesis of fumigermin that inhibits germination of spores of the inducing S.rapamycinicus, and thus helps the fungus to defend resources in the shared habitat against a bacterial competitor. The partially reducing polyketide synthase fngA alone is sufficient for the production of fumigermin. FgnA catalyzes the condensation of 3 malonyl-CoA units to an acetyl-CoA starter, and 3 methylations to yield fumigermin. It is remarkable that the five cluster genes including fgnA are conserved in distantly related fungi, supporting the assumption of a fumigermin cluster; it is thus possible that originally all five genes were functional, but that the genes encoding tailoring enzymes became inactive from mutations, similar to the case of the fgnA gene in strains A1163 and Af293. This is FAD-linked oxidoreductase AFUA_1G00980 from Aspergillus fumigatus (strain ATCC MYA-4609 / CBS 101355 / FGSC A1100 / Af293) (Neosartorya fumigata).